Here is a 174-residue protein sequence, read N- to C-terminus: Variant surface antigen B (174 aa).

Residues 1–29 (MKKSIFSKKLLVSFGSLVALASIPLIAIS) form the signal peptide. Cys30 carries the N-palmitoyl cysteine lipid modification. Residue Cys30 is the site of S-diacylglycerol cysteine attachment. Residues 32-174 (QTNTDKSQQP…SQDSGNGSTK (143 aa)) are disordered. Positions 38 to 49 (SQQPGSGSSTSG) are enriched in low complexity. A compositionally biased stretch (gly residues) spans 50–75 (GQSGTGLGSGTTTGGQSGTTTGGRSG). Positions 76–97 (SGSSSSTTGGQTGTGSDSQDSG) are enriched in low complexity. Repeat copies occupy residues 88–99 (GTGSDSQDSGAK), 100–111 (GTGSDSQDSGAK), 112–123 (GTGSDSQDSGAK), 124–135 (GTGSDSQDSGAK), 136–147 (GTGSDSQDSGAK), 148–159 (GTGSDSQDSGAK), and 160–171 (GTGSDSQDSGNG). The 7 X 12 AA tandem repeats stretch occupies residues 88–171 (GTGSDSQDSG…GSDSQDSGNG (84 aa)). Polar residues predominate over residues 102–174 (GSDSQDSGAK…SQDSGNGSTK (73 aa)).

Its subcellular location is the cell membrane. Responsible for the antigenic diversity for host adaptation. This Mesomycoplasma hyorhinis (Mycoplasma hyorhinis) protein is Variant surface antigen B (vlpB).